A 280-amino-acid polypeptide reads, in one-letter code: Diaminopimelate epimerase (280 aa).

The substrate site is built by Asn13 and Asn66. Residue Cys75 is the Proton donor of the active site. Residues 76-77 (GN), Asn162, Asn195, and 213-214 (ER) contribute to the substrate site. Cys222 functions as the Proton acceptor in the catalytic mechanism. Substrate is bound at residue 223 to 224 (GT).

Belongs to the diaminopimelate epimerase family. In terms of assembly, homodimer.

Its subcellular location is the cytoplasm. The enzyme catalyses (2S,6S)-2,6-diaminopimelate = meso-2,6-diaminopimelate. It functions in the pathway amino-acid biosynthesis; L-lysine biosynthesis via DAP pathway; DL-2,6-diaminopimelate from LL-2,6-diaminopimelate: step 1/1. In terms of biological role, catalyzes the stereoinversion of LL-2,6-diaminopimelate (L,L-DAP) to meso-diaminopimelate (meso-DAP), a precursor of L-lysine and an essential component of the bacterial peptidoglycan. This Synechococcus elongatus (strain ATCC 33912 / PCC 7942 / FACHB-805) (Anacystis nidulans R2) protein is Diaminopimelate epimerase.